We begin with the raw amino-acid sequence, 135 residues long: Large-conductance mechanosensitive channel (135 aa).

2 consecutive transmembrane segments (helical) span residues 10 to 30 (FAMK…AAFG) and 76 to 96 (GAFI…FCAI).

This sequence belongs to the MscL family. In terms of assembly, homopentamer.

The protein resides in the cell inner membrane. Its function is as follows. Channel that opens in response to stretch forces in the membrane lipid bilayer. May participate in the regulation of osmotic pressure changes within the cell. This Proteus mirabilis (strain HI4320) protein is Large-conductance mechanosensitive channel.